The chain runs to 247 residues: C-X-C motif chemokine 16 (247 aa).

Residues 1 to 26 (MRRGFGPLALTLFLFFFALLTLPGDG) form the signal peptide. Topologically, residues 27-198 (NQGSVAGSCY…EPGAGAGTQA (172 aa)) are extracellular. 2 disulfides stabilise this stretch: Cys-35-Cys-65 and Cys-37-Cys-79. A disordered region spans residues 120 to 152 (IPEATEGKPPDTSTAVQFQSTQQSTFPSGAPSL). Residues 131 to 147 (TSTAVQFQSTQQSTFPS) show a composition bias toward low complexity. The helical transmembrane segment at 199–219 (LVPVLSLLAIVFFLVAAMVCV) threads the bilayer. The Cytoplasmic segment spans residues 220–247 (LCNRRVTRQSSSGLQLCYTPVEPRPQGL).

Belongs to the intercrine alpha (chemokine CxC) family. Glycosylated.

It is found in the membrane. In terms of biological role, induces a strong chemotactic response. Induces calcium mobilization. Binds to CXCR6/Bonzo. Also acts as a scavenger receptor on macrophages, which specifically binds to OxLDL (oxidized low density lipoprotein), suggesting that it may be involved in pathophysiology such as atherogenesis. This chain is C-X-C motif chemokine 16 (Cxcl16), found in Rattus norvegicus (Rat).